Here is a 145-residue protein sequence, read N- to C-terminus: Maximins 3/H11 type 3 (145 aa).

Positions 1-18 are cleaved as a signal peptide; it reads MNFKYIVAVSFLIASAYA. 2 consecutive propeptides follow at residues 19–43 and 75–122; these read RSVQNDEQSLSQRDVLEEEESLREI and TAEE…TKKE. An Isoleucine amide modification is found at Ile-144.

The protein belongs to the bombinin family. Expressed by the skin glands.

The protein resides in the secreted. Functionally, maximin-3 shows antibacterial activity against both Gram-positive and Gram-negative bacteria. It also shows antimicrobial activity against the fungus C.albicans, but not against A.flavus nor P.uticale. It has little hemolytic activity. It possess a significant cytotoxicity against tumor cell lines. It possess a significant anti-HIV activity. It shows high spermicidal activity. Its function is as follows. Maximin-H11 shows antimicrobial activity against bacteria and against the fungus C.albicans. Shows strong hemolytic activity. The polypeptide is Maximins 3/H11 type 3 (Bombina maxima (Giant fire-bellied toad)).